Reading from the N-terminus, the 125-residue chain is Small ribosomal subunit protein uS13 (125 aa).

This sequence belongs to the universal ribosomal protein uS13 family. Part of the 30S ribosomal subunit. Forms a loose heterodimer with protein S19. Forms two bridges to the 50S subunit in the 70S ribosome.

In terms of biological role, located at the top of the head of the 30S subunit, it contacts several helices of the 16S rRNA. In the 70S ribosome it contacts the 23S rRNA (bridge B1a) and protein L5 of the 50S subunit (bridge B1b), connecting the 2 subunits; these bridges are implicated in subunit movement. Contacts the tRNAs in the A and P-sites. This is Small ribosomal subunit protein uS13 from Orientia tsutsugamushi (strain Ikeda) (Rickettsia tsutsugamushi).